Here is a 205-residue protein sequence, read N- to C-terminus: Dephospho-CoA kinase (205 aa).

In terms of domain architecture, DPCK spans 3-204 (KVGLTGGIGA…HRAHQPGESQ (202 aa)). 11-16 (GAGKSE) serves as a coordination point for ATP.

The protein belongs to the CoaE family.

It localises to the cytoplasm. It carries out the reaction 3'-dephospho-CoA + ATP = ADP + CoA + H(+). Its pathway is cofactor biosynthesis; coenzyme A biosynthesis; CoA from (R)-pantothenate: step 5/5. In terms of biological role, catalyzes the phosphorylation of the 3'-hydroxyl group of dephosphocoenzyme A to form coenzyme A. The polypeptide is Dephospho-CoA kinase (Streptomyces avermitilis (strain ATCC 31267 / DSM 46492 / JCM 5070 / NBRC 14893 / NCIMB 12804 / NRRL 8165 / MA-4680)).